Here is a 71-residue protein sequence, read N- to C-terminus: Brevinin-1HN1 (71 aa).

An N-terminal signal peptide occupies residues 1–22; it reads MFTSKKPLLLLFFLGTINLSLC. The propeptide occupies 23 to 45; it reads EQERDADEEERRDDPDERDVEVE. Cys65 and Cys71 are oxidised to a cystine.

As to expression, expressed by the skin glands.

It is found in the secreted. Has antimicrobial activity against Gram-positive bacteria and fungi but has weak or no activity against a range of Gram-negative bacteria except P.faecalis. Active against the Gram-positive bacteria E.faecium 091299 (MIC=19 uM), E.faecalis 981 (MIC=19 uM), S.aureus ATCC 25923 (MIC=1.2 uM), S.carnosus KHS (MIC=4.8 uM), B.licheniformis X39 (MIC=2.4 uM) and R.rhodochrous X15 (MIC=1.2 uM). Active against the Gram-negative bacterium P.faecalis X29 (MIC=4.8 uM), is virtually inactive against E.coli ATCC 25922 (MIC=150 uM) and inactive against P.aeruginosa and S.typhi. Has antifungal activity against C.albicans ATCC 2002 (MIC=2.4 uM) and is also active against the slime mold 090223 (MIC=1.2 uM). Has low hemolytic activity against human erythrocytes (LC(50)=75 uM). The polypeptide is Brevinin-1HN1 (Odorrana hainanensis (Odor frog)).